Consider the following 318-residue polypeptide: Glycine--tRNA ligase alpha subunit (318 aa).

Residues 298–318 (EAGGSSPSTSRQGEAPRGESQ) are disordered. The segment covering 300–309 (GGSSPSTSRQ) has biased composition (polar residues).

It belongs to the class-II aminoacyl-tRNA synthetase family. In terms of assembly, tetramer of two alpha and two beta subunits.

Its subcellular location is the cytoplasm. It catalyses the reaction tRNA(Gly) + glycine + ATP = glycyl-tRNA(Gly) + AMP + diphosphate. The protein is Glycine--tRNA ligase alpha subunit of Rhodopseudomonas palustris (strain BisB18).